The sequence spans 239 residues: Ribosomal RNA small subunit methyltransferase G (239 aa).

Residues Gly77, Phe82, 128-129 (AE), and Arg147 each bind S-adenosyl-L-methionine. Residues 219–239 (RKTPKKYPRKPGTPNKLPIEK) are disordered.

The protein belongs to the methyltransferase superfamily. RNA methyltransferase RsmG family.

It localises to the cytoplasm. Its function is as follows. Specifically methylates the N7 position of guanine in position 535 of 16S rRNA. This chain is Ribosomal RNA small subunit methyltransferase G, found in Bacillus cytotoxicus (strain DSM 22905 / CIP 110041 / 391-98 / NVH 391-98).